Reading from the N-terminus, the 195-residue chain is HTH-type transcriptional regulator BetI (195 aa).

The 61-residue stretch at 8-68 (EIRRAQLIDA…ATMRHVLRDL (61 aa)) folds into the HTH tetR-type domain. The H-T-H motif DNA-binding region spans 31–50 (TLASVAQRASISTGIVSHYF).

The protein operates within amine and polyamine biosynthesis; betaine biosynthesis via choline pathway [regulation]. Its function is as follows. Repressor involved in the biosynthesis of the osmoprotectant glycine betaine. It represses transcription of the choline transporter BetT and the genes of BetAB involved in the synthesis of glycine betaine. This Paraburkholderia xenovorans (strain LB400) protein is HTH-type transcriptional regulator BetI.